A 366-amino-acid chain; its full sequence is 5-formaminoimidazole-4-carboxamide-1-(beta)-D-ribofuranosyl 5'-monophosphate synthetase (366 aa).

Positions 27 and 96 each coordinate 5-amino-1-(5-phospho-beta-D-ribosyl)imidazole-4-carboxamide. The ATP-grasp domain occupies 131-357 (RKWLEDAGVP…IAREIKEAVK (227 aa)). ATP contacts are provided by residues 154-208 (PVIV…VRFY) and Glu-239. 5-amino-1-(5-phospho-beta-D-ribosyl)imidazole-4-carboxamide is bound at residue Asn-263. Glu-302 and Glu-315 together coordinate Mg(2+).

This sequence belongs to the phosphohexose mutase family. Requires Mg(2+) as cofactor. Mn(2+) is required as a cofactor.

The enzyme catalyses 5-amino-1-(5-phospho-beta-D-ribosyl)imidazole-4-carboxamide + formate + ATP = 5-formamido-1-(5-phospho-D-ribosyl)imidazole-4-carboxamide + ADP + phosphate. The protein operates within purine metabolism; IMP biosynthesis via de novo pathway; 5-formamido-1-(5-phospho-D-ribosyl)imidazole-4-carboxamide from 5-amino-1-(5-phospho-D-ribosyl)imidazole-4-carboxamide (formate route): step 1/1. Its function is as follows. Catalyzes the ATP- and formate-dependent formylation of 5-aminoimidazole-4-carboxamide-1-beta-d-ribofuranosyl 5'-monophosphate (AICAR) to 5-formaminoimidazole-4-carboxamide-1-beta-d-ribofuranosyl 5'-monophosphate (FAICAR) in the absence of folates. This Korarchaeum cryptofilum (strain OPF8) protein is 5-formaminoimidazole-4-carboxamide-1-(beta)-D-ribofuranosyl 5'-monophosphate synthetase.